A 318-amino-acid polypeptide reads, in one-letter code: Transaldolase (318 aa).

Lys-132 acts as the Schiff-base intermediate with substrate in catalysis.

This sequence belongs to the transaldolase family. Type 1 subfamily. As to quaternary structure, homodimer.

It is found in the cytoplasm. The enzyme catalyses D-sedoheptulose 7-phosphate + D-glyceraldehyde 3-phosphate = D-erythrose 4-phosphate + beta-D-fructose 6-phosphate. Its pathway is carbohydrate degradation; pentose phosphate pathway; D-glyceraldehyde 3-phosphate and beta-D-fructose 6-phosphate from D-ribose 5-phosphate and D-xylulose 5-phosphate (non-oxidative stage): step 2/3. Transaldolase is important for the balance of metabolites in the pentose-phosphate pathway. This chain is Transaldolase, found in Shewanella baltica (strain OS185).